The primary structure comprises 397 residues: N-acetyllactosaminide beta-1,3-N-acetylglucosaminyltransferase 2 (397 aa).

The Cytoplasmic segment spans residues 1–7 (MSVGRRR). A helical; Signal-anchor for type II membrane protein transmembrane segment spans residues 8–28 (VKLLGILMMANVFIYLIVEVS). The Lumenal portion of the chain corresponds to 29-325 (KNSSQDKNGK…ALRLYSATSR (297 aa)). N-linked (GlcNAc...) asparagine glycosylation is found at Asn-30, Asn-79, Asn-89, Asn-127, Asn-173, and Asn-219.

It belongs to the glycosyltransferase 31 family. As to quaternary structure, interacts with B3GNT8; this interaction greatly increases B3GNT2 catalytic activity, independently of B3GNT8 enzymatic activity. Mn(2+) is required as a cofactor. In terms of tissue distribution, expressed in heart, brain, lung, kidney and testis and, to a lesser extent, in liver and skeletal muscle. No expression in spleen.

The protein localises to the golgi apparatus membrane. The catalysed reaction is a beta-D-galactosyl-(1-&gt;4)-N-acetyl-beta-D-glucosaminyl derivative + UDP-N-acetyl-alpha-D-glucosamine = an N-acetyl-beta-D-glucosaminyl-(1-&gt;3)-beta-D-galactosyl-(1-&gt;4)-N-acetyl-beta-D-glucosaminyl derivative + UDP + H(+). It functions in the pathway protein modification; protein glycosylation. In terms of biological role, beta-1,3-N-acetylglucosaminyltransferase involved in the synthesis of poly-N-acetyllactosamine. Catalyzes the initiation and elongation of poly-N-acetyllactosamine chains. Probably constitutes the main polylactosamine synthase. The chain is N-acetyllactosaminide beta-1,3-N-acetylglucosaminyltransferase 2 (B3GNT2) from Mus musculus (Mouse).